Here is a 73-residue protein sequence, read N- to C-terminus: uncharacterized protein (73 aa).

This is an uncharacterized protein from Thermoproteus tenax virus 1 (strain KRA1) (TTV1).